The sequence spans 208 residues: Thymidylate kinase (208 aa).

10-17 is a binding site for ATP; that stretch reads GGEGAGKS.

This sequence belongs to the thymidylate kinase family.

It catalyses the reaction dTMP + ATP = dTDP + ADP. Functionally, phosphorylation of dTMP to form dTDP in both de novo and salvage pathways of dTTP synthesis. The protein is Thymidylate kinase of Alcanivorax borkumensis (strain ATCC 700651 / DSM 11573 / NCIMB 13689 / SK2).